We begin with the raw amino-acid sequence, 422 residues long: Dihydrolipoyllysine-residue succinyltransferase component of 2-oxoglutarate dehydrogenase complex (422 aa).

The Lipoyl-binding domain maps to 1-76 (MPEVKVPELA…EVGQAIAIIG (76 aa)). Lys42 bears the N6-lipoyllysine mark. A disordered region spans residues 77 to 185 (EGSGNASKEN…SAKEEKKYNQ (109 aa)). 2 stretches are compositionally biased toward polar residues: residues 80–94 (GNAS…TPQQ) and 116–130 (NQAN…NATP). The Peripheral subunit-binding (PSBD) domain occupies 127 to 163 (NATPSARRYARENGVNLAEVSPKTNDVVRKEDIDKKQ). Residues 152–163 (DVVRKEDIDKKQ) are compositionally biased toward basic and acidic residues. Residues 164-176 (QAPASTQTTQQAS) are compositionally biased toward low complexity. Residues His393 and Asp397 contribute to the active site.

Belongs to the 2-oxoacid dehydrogenase family. Forms a 24-polypeptide structural core with octahedral symmetry. Part of the 2-oxoglutarate dehydrogenase (OGDH) complex composed of E1 (2-oxoglutarate dehydrogenase), E2 (dihydrolipoamide succinyltransferase) and E3 (dihydrolipoamide dehydrogenase); the complex contains multiple copies of the three enzymatic components (E1, E2 and E3). Requires (R)-lipoate as cofactor.

The enzyme catalyses N(6)-[(R)-dihydrolipoyl]-L-lysyl-[protein] + succinyl-CoA = N(6)-[(R)-S(8)-succinyldihydrolipoyl]-L-lysyl-[protein] + CoA. It functions in the pathway amino-acid degradation; L-lysine degradation via saccharopine pathway; glutaryl-CoA from L-lysine: step 6/6. In terms of biological role, E2 component of the 2-oxoglutarate dehydrogenase (OGDH) complex which catalyzes the second step in the conversion of 2-oxoglutarate to succinyl-CoA and CO(2). The chain is Dihydrolipoyllysine-residue succinyltransferase component of 2-oxoglutarate dehydrogenase complex (odhB) from Staphylococcus aureus (strain USA300).